The sequence spans 1001 residues: 26S proteasome non-ATPase regulatory subunit 1 homolog B (1001 aa).

An N-acetylalanine modification is found at Ala2. Lys166 is covalently cross-linked (Glycyl lysine isopeptide (Lys-Gly) (interchain with G-Cter in ubiquitin)). 10 PC repeats span residues 412-447, 452-485, 487-521, 522-555, 557-590, 591-626, 627-659, 661-695, 696-736, and 739-771; these read SATA…GGSP, GALY…EVIQ, GACL…VAGE, AAGI…EKII, GLAL…IIRY, GGMY…DVRR, TAVL…PHVR, GAAL…FVRQ, GALI…DTMS, and GAIL…TAVI. 2 disordered regions span residues 853–896 and 954–1001; these read AKKE…TVEK and SLTD…YASP. Over residues 854-863 the composition is skewed to basic and acidic residues; sequence KKEAEQKAKA. Ser889 is subject to Phosphoserine. Residues 961–985 are compositionally biased toward low complexity; the sequence is STASPAVGAEAAGQAQQAATTSAMA.

It belongs to the proteasome subunit S1 family. Component of the 19S regulatory particle (RP/PA700) base subcomplex of the 26S proteasome. The 26S proteasome is composed of a core protease (CP), known as the 20S proteasome, capped at one or both ends by the 19S regulatory particle (RP/PA700). The RP/PA700 complex is composed of at least 17 different subunits in two subcomplexes, the base and the lid, which form the portions proximal and distal to the 20S proteolytic core, respectively.

Acts as a regulatory subunit of the 26 proteasome which is involved in the ATP-dependent degradation of ubiquitinated proteins. This Arabidopsis thaliana (Mouse-ear cress) protein is 26S proteasome non-ATPase regulatory subunit 1 homolog B (RPN2B).